A 1401-amino-acid polypeptide reads, in one-letter code: DNA-directed RNA polymerase subunit beta' (1401 aa).

The Zn(2+) site is built by Cys-70, Cys-72, Cys-85, and Cys-88. Asp-460, Asp-462, and Asp-464 together coordinate Mg(2+). Residues Cys-814, Cys-888, Cys-895, and Cys-898 each coordinate Zn(2+). The segment at 1369–1388 (RQKQKAVEQEGPSAEQATDN) is disordered.

Belongs to the RNA polymerase beta' chain family. The RNAP catalytic core consists of 2 alpha, 1 beta, 1 beta' and 1 omega subunit. When a sigma factor is associated with the core the holoenzyme is formed, which can initiate transcription. Mg(2+) is required as a cofactor. It depends on Zn(2+) as a cofactor.

The catalysed reaction is RNA(n) + a ribonucleoside 5'-triphosphate = RNA(n+1) + diphosphate. DNA-dependent RNA polymerase catalyzes the transcription of DNA into RNA using the four ribonucleoside triphosphates as substrates. This is DNA-directed RNA polymerase subunit beta' from Aliivibrio fischeri (strain ATCC 700601 / ES114) (Vibrio fischeri).